The sequence spans 246 residues: Type III pantothenate kinase (246 aa).

6–13 contributes to the ATP binding site; that stretch reads DVGNTHSV. 103–106 contacts substrate; it reads GADR. The active-site Proton acceptor is the Asp-105. Asp-125 contacts K(+). Thr-128 contributes to the ATP binding site. Thr-179 is a substrate binding site.

It belongs to the type III pantothenate kinase family. In terms of assembly, homodimer. NH4(+) is required as a cofactor. It depends on K(+) as a cofactor.

The protein resides in the cytoplasm. The catalysed reaction is (R)-pantothenate + ATP = (R)-4'-phosphopantothenate + ADP + H(+). It functions in the pathway cofactor biosynthesis; coenzyme A biosynthesis; CoA from (R)-pantothenate: step 1/5. Functionally, catalyzes the phosphorylation of pantothenate (Pan), the first step in CoA biosynthesis. The chain is Type III pantothenate kinase (coaX) from Thermotoga maritima (strain ATCC 43589 / DSM 3109 / JCM 10099 / NBRC 100826 / MSB8).